Consider the following 403-residue polypeptide: Histidine--tRNA ligase (403 aa).

Belongs to the class-II aminoacyl-tRNA synthetase family. Homodimer.

The protein localises to the cytoplasm. It carries out the reaction tRNA(His) + L-histidine + ATP = L-histidyl-tRNA(His) + AMP + diphosphate + H(+). The polypeptide is Histidine--tRNA ligase (hisS) (Aquifex aeolicus (strain VF5)).